The sequence spans 419 residues: Chaperone protein dnaJ 2 (419 aa).

The J domain occupies 14-75 (KFYEILGVPK…EKREIYDQYG (62 aa)). Residues 136–220 (GTTKKLSLSR…CKGEKVVSEK (85 aa)) form a CR-type zinc finger. Residues Cys-149, Cys-152, Cys-165, Cys-168, Cys-192, Cys-195, Cys-208, and Cys-211 each coordinate Zn(2+). CXXCXGXG motif repeat units follow at residues 149–156 (CSKCNGKG), 165–172 (CGGCQGSG), 192–199 (CNDCKGTG), and 208–215 (CPQCKGEK). Positions 378–391 (TTLHDVNIEDEMKR) are enriched in basic and acidic residues. The interval 378 to 419 (TTLHDVNIEDEMKRKAQAQREAYDDDEEDHPGGAQRVQCAQQ) is disordered. The residue at position 416 (Cys-416) is a Cysteine methyl ester. Residue Cys-416 is the site of S-farnesyl cysteine attachment. Residues 417 to 419 (AQQ) constitute a propeptide, removed in mature form.

The protein belongs to the DnaJ family. A/I subfamily. As to quaternary structure, homodimer. Zn(2+) is required as a cofactor. In terms of processing, farnesylated. Expressed in both etiolated and light-grown tissues.

It is found in the membrane. Functionally, plays a continuous role in plant development probably in the structural organization of compartments. The chain is Chaperone protein dnaJ 2 (ATJ2) from Arabidopsis thaliana (Mouse-ear cress).